Reading from the N-terminus, the 723-residue chain is Nicastrin (723 aa).

An N-terminal signal peptide occupies residues methionine 1–cysteine 16. The Extracellular portion of the chain corresponds to aspartate 17–aspartate 678. 6 N-linked (GlcNAc...) asparagine glycosylation sites follow: asparagine 40, asparagine 181, asparagine 271, asparagine 328, asparagine 409, and asparagine 627. Residues alanine 679–alanine 699 traverse the membrane as a helical segment. The Cytoplasmic portion of the chain corresponds to valine 700–leucine 723.

It belongs to the nicastrin family. Component of the gamma-secretase complex, a complex probably composed of the presenilin homodimer (sel-12, hop-1 or spe-4), nicastrin (aph-2), aph-1 and pen-2.

It localises to the membrane. Functionally, essential subunit of the gamma-secretase complex, an endoprotease complex that catalyzes the intramembrane cleavage of integral membrane proteins such as Notch (glp-1 or lin-12). It may represents a stabilizing cofactor required for the assembly of the gamma-secretase complex. The sequence is that of Nicastrin (aph-2) from Caenorhabditis elegans.